The primary structure comprises 194 residues: Leucyl/phenylalanyl-tRNA--protein transferase (194 aa).

The protein belongs to the L/F-transferase family.

The protein resides in the cytoplasm. It catalyses the reaction N-terminal L-lysyl-[protein] + L-leucyl-tRNA(Leu) = N-terminal L-leucyl-L-lysyl-[protein] + tRNA(Leu) + H(+). It carries out the reaction N-terminal L-arginyl-[protein] + L-leucyl-tRNA(Leu) = N-terminal L-leucyl-L-arginyl-[protein] + tRNA(Leu) + H(+). The catalysed reaction is L-phenylalanyl-tRNA(Phe) + an N-terminal L-alpha-aminoacyl-[protein] = an N-terminal L-phenylalanyl-L-alpha-aminoacyl-[protein] + tRNA(Phe). Functionally, functions in the N-end rule pathway of protein degradation where it conjugates Leu, Phe and, less efficiently, Met from aminoacyl-tRNAs to the N-termini of proteins containing an N-terminal arginine or lysine. This is Leucyl/phenylalanyl-tRNA--protein transferase from Pelodictyon phaeoclathratiforme (strain DSM 5477 / BU-1).